We begin with the raw amino-acid sequence, 644 residues long: DNA mismatch repair protein MutL (644 aa).

Disordered regions lie at residues 353-399 (SESG…SQLT) and 420-440 (GSMA…RARA). Residues 370–381 (SPESKTHSTWNE) are compositionally biased toward polar residues. Over residues 383-399 (SRVDTSRVEISRDSQLT) the composition is skewed to basic and acidic residues.

It belongs to the DNA mismatch repair MutL/HexB family.

Functionally, this protein is involved in the repair of mismatches in DNA. It is required for dam-dependent methyl-directed DNA mismatch repair. May act as a 'molecular matchmaker', a protein that promotes the formation of a stable complex between two or more DNA-binding proteins in an ATP-dependent manner without itself being part of a final effector complex. This is DNA mismatch repair protein MutL from Shewanella sp. (strain MR-4).